The following is a 578-amino-acid chain: Longifolene synthase (578 aa).

Residues Asp331, Asp335, and Asp475 each contribute to the Mg(2+) site. The short motif at 331–335 (DDLYD) is the DDXXD motif element.

It belongs to the terpene synthase family. Tpsd subfamily. The cofactor is Mg(2+). Mn(2+) is required as a cofactor.

The catalysed reaction is (2E,6E)-farnesyl diphosphate = longifolene + diphosphate. It participates in sesquiterpene biosynthesis. The protein operates within terpene metabolism; oleoresin biosynthesis. Its function is as follows. Terpene synthase (TPS) involved in the biosynthesis of sesquiterpene natural products included in conifer oleoresin secretions and volatile emissions; these compounds contribute to biotic and abiotic stress defense against herbivores and pathogens. Catalyzes the conversion of (2E,6E)-farnesyl diphosphate (FPP) to longifolene. The protein is Longifolene synthase of Picea engelmannii x Picea glauca (Hybrid white spruce).